Reading from the N-terminus, the 185-residue chain is GLNDFQKQKIKFTFDFFLDYNKDGSIQWEDFEEMIKRYKEVNKGSLSDADYKSMQASLEDEWRDLKGRADINKDDVVSWEEYLAMWEKTIATCKSVADLPAWCQNRIPFLFKGMDVSGDGIVDLEEFQNYCKNFQLQCADVPAVYNVITDGGKVTFDLNRYKELYYRLLTSPAADAGNTLMGQKP.

4 EF-hand domains span residues 5-41 (FQKQKIKFTFDFFLDYNKDGSIQWEDFEEMIKRYKEV), 57-92 (SLEDEWRDLKGRADINKDDVVSWEEYLAMWEKTIAT), 102-137 (WCQNRIPFLFKGMDVSGDGIVDLEEFQNYCKNFQLQ), and 138-173 (CADVPAVYNVITDGGKVTFDLNRYKELYYRLLTSPA). Aspartate 19, asparagine 21, aspartate 23, serine 25, aspartate 30, aspartate 70, asparagine 72, aspartate 74, glutamate 81, aspartate 115, serine 117, aspartate 119, and glutamate 126 together coordinate Ca(2+).

Its function is as follows. Like parvalbumins, SCPs seem to be more abundant in fast contracting muscles, but no functional relationship can be established from this distribution. This is Sarcoplasmic calcium-binding proteins I, III, and IV from Branchiostoma lanceolatum (Common lancelet).